The following is a 221-amino-acid chain: MKTATAVVLLLFAFTSKSYFFGVANAANSPVLDTDGDELQTGVQYYVLSSISGAGGGGLALGRATGQSCPEIVVQRRSDLDNGTPVIFSNADSKDDVVRVSTDVNIEFVPIRDRLCSTSTVWRLDNYDNSAGKWWVTTDGVKGEPGPNTLCSWFKIEKAGVLGYKFRFCPSVCDSCTTLCSDIGRHSDDDGQIRLALSDNEWAWMFKKASKTIKQVVNAKH.

The signal sequence occupies residues 1–26; that stretch reads MKTATAVVLLLFAFTSKSYFFGVANA. The cysteines at positions 69 and 116 are disulfide-linked.

This sequence belongs to the protease inhibitor I3 (leguminous Kunitz-type inhibitor) family.

This chain is 21 kDa seed protein (ASP), found in Theobroma cacao (Cacao).